The chain runs to 405 residues: MPEPVAEPALNGLRLNLRILSIVMFNFASYLTIGLPLAVLPGYVHDVMGFSAFWAGLVISLQYFATLLSRPHAGRYADLLGPKKIVVFGLCGCFLSGLGYLTAGLTASLPVISLLLLCLGRVILGIGQSFAGTGSTLWGVGVVGSLHIGRVISWNDIVTYGAMAMGAPLGVVFYHWGGLQALALIIMGVALVAILLAIPRPTVKASKGKPLPFRAVLGRVWLYGMALALASAGFGVIATFITLFYDVKGWDGAAFALTLFSCAFVGTRLLFPNGINRIGGLNVAMICFSVEIIGLLLVGVATMPWMAKIGVLLAGAGFSLVFPALGVVAVKAVPQQNQGAALATYTVFMDLSLGVTGPLAGLVMSWAGVPVIYLAAAGLVAIALLLTWRLKKRPPEHVPEAASSS.

A run of 12 helical transmembrane segments spans residues 19–39 (ILSI…PLAV), 47–67 (VMGF…FATL), 85–105 (IVVF…TAGL), 129–149 (SFAG…LHIG), 157–177 (IVTY…YHWG), 178–198 (GLQA…LLAI), 224–244 (GMAL…ITLF), 252–272 (GAAF…LLFP), 283–303 (VAMI…VATM), 309–329 (IGVL…GVVA), 344–364 (TYTV…GLVM), and 366–386 (WAGV…ALLL).

It belongs to the major facilitator superfamily. YhhS family.

The protein resides in the cell inner membrane. This is an uncharacterized protein from Escherichia coli O157:H7.